A 134-amino-acid polypeptide reads, in one-letter code: uncharacterized protein (134 aa).

This is an uncharacterized protein from Swinepox virus (strain Kasza) (SWPV).